A 48-amino-acid polypeptide reads, in one-letter code: MRKKIIFVCQDCLSRNYVKRWTKQPLQRLIINKYCKQCNQKTKHLDSF.

It belongs to the bacterial ribosomal protein bL33 family.

This chain is Large ribosomal subunit protein bL33B (rpmG2), found in Mycoplasma genitalium (strain ATCC 33530 / DSM 19775 / NCTC 10195 / G37) (Mycoplasmoides genitalium).